The following is a 279-amino-acid chain: Dehydrogenase/reductase SDR family member 4 (279 aa).

37–61 serves as a coordination point for NADP(+); it reads LVTASTDGIGLAIARRLAEDGAHVV. An N6-acetyllysine; alternate modification is found at lysine 93. Lysine 93 bears the N6-succinyllysine; alternate mark. An N6-acetyllysine modification is found at lysine 106. Serine 170 is a substrate binding site. Tyrosine 183 acts as the Proton acceptor in catalysis. Lysine 187 serves as a coordination point for NADP(+). Lysine 217 carries the N6-acetyllysine; alternate modification. Position 217 is an N6-succinyllysine; alternate (lysine 217). Phosphoserine is present on serine 221. N6-succinyllysine occurs at positions 228 and 235. A Peroxisomal targeting signal motif is present at residues 277–279; that stretch reads SRL.

The protein belongs to the short-chain dehydrogenases/reductases (SDR) family. Homotetramer.

The protein resides in the peroxisome. The catalysed reaction is a secondary alcohol + NADP(+) = a ketone + NADPH + H(+). It catalyses the reaction 3alpha-hydroxy-5beta-pregnan-20-one + NADP(+) = 5beta-pregnan-3,20-dione + NADPH + H(+). The enzyme catalyses 5beta-dihydrotestosterone + NADPH + H(+) = 5beta-androstane-3alpha,17beta-diol + NADP(+). It carries out the reaction all-trans-retinol + NADP(+) = all-trans-retinal + NADPH + H(+). The catalysed reaction is isatin + NADPH + H(+) = 3-hydroxyindolin-2-one + NADP(+). Functionally, NADPH-dependent oxidoreductase which catalyzes the reduction of a variety of compounds bearing carbonyl groups including ketosteroids, alpha-dicarbonyl compounds, aldehydes, aromatic ketones and quinones. Reduces all-trans-retinal and 9-cis retinal. Reduces 3-ketosteroids and benzil into 3alpha-hydroxysteroids and S-benzoin, respectively, in contrast to the stereoselectivity of primates DHRS4s which produce 3beta-hydroxysteroids and R-benzoin. In the reverse reaction, catalyzes the NADP-dependent oxidation of 3alpha-hydroxysteroids and alcohol, but with much lower efficiency. Involved in the metabolism of 3alpha-hydroxysteroids, retinoid, isatin and xenobiotic carbonyl compounds. The polypeptide is Dehydrogenase/reductase SDR family member 4 (Dhrs4) (Rattus norvegicus (Rat)).